A 337-amino-acid chain; its full sequence is Palmitoyltransferase ZDHHC15 (337 aa).

At 1–20 the chain is on the cytoplasmic side; sequence MRRGWKMALSGGLRCCRRVL. The helical transmembrane segment at 21–41 threads the bilayer; it reads SWVPVLVIVLVVLWSYYAYVF. Residues 42–56 are Lumenal-facing; that stretch reads ELCLVTVLSPAEKVI. A helical transmembrane segment spans residues 57-77; sequence YLILYHAIFVFFTWTYWKSIF. The Cytoplasmic portion of the chain corresponds to 78-172; the sequence is TLPQQPNQKF…NNCIGFSNYK (95 aa). The 51-residue stretch at 129–179 folds into the DHHC domain; the sequence is RFCDRCHLIKPDRCHHCSVCAMCVLKMDHHCPWVNNCIGFSNYKFFLQFLA. Positions 131, 134, 144, 145, 148, 151, and 158 each coordinate Zn(2+). Cysteine 159 functions as the S-palmitoyl cysteine intermediate in the catalytic mechanism. Cysteine 165 lines the Zn(2+) pocket. A helical membrane pass occupies residues 173 to 193; the sequence is FFLQFLAYSVLYCLYIATTVF. Topologically, residues 194–210 are lumenal; the sequence is SYFIKYWRGELPSVRSK. A helical membrane pass occupies residues 211-234; that stretch reads FHVLFLLFVACMFFVSLVILFGYH. Over 235 to 337 the chain is Cytoplasmic; the sequence is CWLVSRNKTT…SSSLAVETET (103 aa). The tract at residues 306-337 is disordered; that stretch reads PLLANEETWEDNEDDNQDYPEGSSSLAVETET. Positions 312–323 are enriched in acidic residues; that stretch reads ETWEDNEDDNQD. Residues 327–337 are compositionally biased toward polar residues; that stretch reads GSSSLAVETET.

Belongs to the DHHC palmitoyltransferase family. Autopalmitoylated (in vitro). Expressed in placenta, liver, lung, kidney, heart and brain.

Its subcellular location is the golgi apparatus membrane. It localises to the postsynaptic density. It catalyses the reaction L-cysteinyl-[protein] + hexadecanoyl-CoA = S-hexadecanoyl-L-cysteinyl-[protein] + CoA. The enzyme catalyses L-cysteinyl-[protein] + tetradecanoyl-CoA = S-tetradecanoyl-L-cysteinyl-[protein] + CoA. It carries out the reaction L-cysteinyl-[protein] + octadecanoyl-CoA = S-octadecanoyl-L-cysteinyl-[protein] + CoA. In terms of biological role, palmitoyltransferase that catalyzes the addition of palmitate onto various protein substrates. Has no stringent fatty acid selectivity and in addition to palmitate can also transfer onto target proteins myristate from tetradecanoyl-CoA and stearate from octadecanoyl-CoA. Palmitoylates IGF2R and SORT1, promoting their partitioning to an endosomal membrane subdomain where they can interact with the retromer cargo-selective complex. Thereby, regulates retrograde transport from endosomes to the Golgi apparatus of these lysosomal sorting receptors and plays a role in trafficking of lysosomal proteins. In the nervous system, catalyzes the palmitoylation of DLG4/PSD95 and regulates its synaptic clustering and function in synaptogenesis. Could be involved in the differentiation of dopaminergic neurons and the development of the diencephalon. Could also catalyze the palmitoylation of GAP43. Could also palmitoylate DNAJC5 and regulate its localization to the Golgi membrane. Could also palmitoylate FYN as shown in vitro. May palmitoylate CALHM3 subunit of gustatory voltage-gated ion channels and modulate channel gating and kinetics. The polypeptide is Palmitoyltransferase ZDHHC15 (Homo sapiens (Human)).